Reading from the N-terminus, the 353-residue chain is Protein U67 (353 aa).

It belongs to the herpesviridae UL95 family.

The polypeptide is Protein U67 (U67) (Homo sapiens (Human)).